Here is a 351-residue protein sequence, read N- to C-terminus: uncharacterized protein (351 aa).

A signal peptide spans 1 to 32 (MKNKKRVFIASSLSCVLLLLSAANTEANSANK). Residues 26-74 (EANSANKDSQDQTKKEHVDKAQQKEKRNVNDKDKNTPGPDDIGKNGKVT) form a disordered region. Basic and acidic residues predominate over residues 33 to 60 (DSQDQTKKEHVDKAQQKEKRNVNDKDKN).

It belongs to the aerolysin family.

This is an uncharacterized protein from Staphylococcus aureus (strain MRSA252).